We begin with the raw amino-acid sequence, 363 residues long: Serpentine receptor class T-55 (363 aa).

An N-terminal signal peptide occupies residues 1–18; the sequence is MKLRHFLIFLMLIPISSS. Transmembrane regions (helical) follow at residues 70–90, 107–127, 143–163, 187–207, 231–251, 278–298, and 303–323; these read IYYI…IWVF, VFIG…PGFV, IVGK…AFLG, WLTV…TVLF, FLYF…ACLC, ICIS…FVLP, and FFHV…IMYI.

It belongs to the nematode receptor-like protein srt family.

Its subcellular location is the membrane. The sequence is that of Serpentine receptor class T-55 (srt-55) from Caenorhabditis elegans.